Here is a 263-residue protein sequence, read N- to C-terminus: Phosphatidylglycerol--prolipoprotein diacylglyceryl transferase (263 aa).

A run of 4 helical transmembrane segments spans residues 10–30 (VAITLGPLQFRWYGLMYLFGF), 56–76 (MVTYVILGVVLGGRIGYILFY), 91–111 (IWNGGMSFHGGLLGVVFAMWL), and 117–137 (GLGFMDVSDFVAPLIPPGLFF). Arginine 139 lines the a 1,2-diacyl-sn-glycero-3-phospho-(1'-sn-glycerol) pocket. 3 helical membrane-spanning segments follow: residues 171-191 (PSQLYECALEGVILFLALWVF), 199-219 (GHVSGLFALLYGVFRFTVEFV), and 231-251 (FGWLTMGQVLCLPLIMLGLWL).

This sequence belongs to the Lgt family.

The protein resides in the cell inner membrane. It catalyses the reaction L-cysteinyl-[prolipoprotein] + a 1,2-diacyl-sn-glycero-3-phospho-(1'-sn-glycerol) = an S-1,2-diacyl-sn-glyceryl-L-cysteinyl-[prolipoprotein] + sn-glycerol 1-phosphate + H(+). It participates in protein modification; lipoprotein biosynthesis (diacylglyceryl transfer). Catalyzes the transfer of the diacylglyceryl group from phosphatidylglycerol to the sulfhydryl group of the N-terminal cysteine of a prolipoprotein, the first step in the formation of mature lipoproteins. This Nitratidesulfovibrio vulgaris (strain DP4) (Desulfovibrio vulgaris) protein is Phosphatidylglycerol--prolipoprotein diacylglyceryl transferase.